Consider the following 175-residue polypeptide: Sec-independent protein translocase protein TatB (175 aa).

A helical transmembrane segment spans residues 1–21 (MLDLGLSKMALIGVVALVVLG). Positions 94–115 (SAVSPGGSAAADAPDGPSAASG) are enriched in low complexity. Disordered regions lie at residues 94–118 (SAVS…GEPS) and 153–175 (VQSG…ARFL). Over residues 160–175 (VARHRPASLRRPARFL) the composition is skewed to basic residues.

The protein belongs to the TatB family. In terms of assembly, the Tat system comprises two distinct complexes: a TatABC complex, containing multiple copies of TatA, TatB and TatC subunits, and a separate TatA complex, containing only TatA subunits. Substrates initially bind to the TatABC complex, which probably triggers association of the separate TatA complex to form the active translocon.

Its subcellular location is the cell inner membrane. Functionally, part of the twin-arginine translocation (Tat) system that transports large folded proteins containing a characteristic twin-arginine motif in their signal peptide across membranes. Together with TatC, TatB is part of a receptor directly interacting with Tat signal peptides. TatB may form an oligomeric binding site that transiently accommodates folded Tat precursor proteins before their translocation. This chain is Sec-independent protein translocase protein TatB, found in Burkholderia pseudomallei (strain 1106a).